The primary structure comprises 471 residues: UDP-N-acetylmuramoylalanine--D-glutamate ligase (471 aa).

122–128 (GTNGKTT) is a binding site for ATP.

This sequence belongs to the MurCDEF family.

The protein localises to the cytoplasm. It carries out the reaction UDP-N-acetyl-alpha-D-muramoyl-L-alanine + D-glutamate + ATP = UDP-N-acetyl-alpha-D-muramoyl-L-alanyl-D-glutamate + ADP + phosphate + H(+). The protein operates within cell wall biogenesis; peptidoglycan biosynthesis. In terms of biological role, cell wall formation. Catalyzes the addition of glutamate to the nucleotide precursor UDP-N-acetylmuramoyl-L-alanine (UMA). The polypeptide is UDP-N-acetylmuramoylalanine--D-glutamate ligase (Streptomyces coelicolor (strain ATCC BAA-471 / A3(2) / M145)).